A 413-amino-acid chain; its full sequence is Methylaspartate ammonia-lyase (413 aa).

Gln-172 provides a ligand contact to (2S,3S)-3-methyl-L-aspartate. Mg(2+) is bound by residues Asp-238, Glu-273, and Asp-307. Residue Gln-329 coordinates (2S,3S)-3-methyl-L-aspartate. Lys-331 functions as the Proton acceptor in the catalytic mechanism. 360-361 contributes to the (2S,3S)-3-methyl-L-aspartate binding site; that stretch reads TC.

Belongs to the methylaspartate ammonia-lyase family. In terms of assembly, homodimer. Mg(2+) is required as a cofactor.

The enzyme catalyses (2S,3S)-3-methyl-L-aspartate = mesaconate + NH4(+). Its pathway is amino-acid degradation; L-glutamate degradation via mesaconate pathway; acetate and pyruvate from L-glutamate: step 2/4. Involved in the methylaspartate cycle. Catalyzes the formation of the alpha,beta-unsaturated bond by the reversible anti elimination of ammonia from L-threo-beta-methylaspartate (L-threo-(2S,3S)-3-methylaspartate) to give mesaconate. This is Methylaspartate ammonia-lyase from Citrobacter amalonaticus.